Consider the following 411-residue polypeptide: MTHWFHRNPLKATAPVSFNYYGMITGPPASKICNDLRSARTRLLELFTDLSCNPETMKNAADLYFSLLQGFINSVGDSTQESKLRYIQNFKWTDTLQGHVPSAQQDAVFELISMGFNVALWYTKYASRLAGKENITEDEAKEVHRSLKIAAGIFKHLKESHIPKLLTPAEKGRDLEARLIDAYIIQCQAEAQEVTIARAIELKHAPGLIAALAYDTASFYQKADHTLSSLEPAHSAKWRKYLHLKMCFYTAYAYCYHGQTLLASDKCGEAIRSLQEAEKLYAEAEALCKEYGETKGPGPTAKPSGHLFFRKLGSLVKNTLDKCQRENGFIYFQKIPTEAPQLELKANYGLVEPVPFEFPPMSAHWTPEALAAFDLTKRPKDDSVKPKPEEDVKPVKEPDIRPQKDTGCSVS.

The 319-residue stretch at 90 to 408 (FKWTDTLQGH…DIRPQKDTGC (319 aa)) folds into the BRO1 domain. Basic and acidic residues predominate over residues 375-404 (LTKRPKDDSVKPKPEEDVKPVKEPDIRPQK). The segment at 375–411 (LTKRPKDDSVKPKPEEDVKPVKEPDIRPQKDTGCSVS) is disordered. Cysteine methyl ester is present on Cys408. A lipid anchor (S-farnesyl cysteine) is attached at Cys408. Positions 409–411 (SVS) are cleaved as a propeptide — removed in mature form.

This sequence belongs to the BROX family. As to quaternary structure, monomer. Interacts with CHMP4B. Interacts with CHMP5: this interaction allows the recruitment of BROX to cellular membranes. Interacts with SYN2; this interaction promotes SYN2 ubiquitination and facilitates the relaxation of mechanical stress imposed by compressive actin fibers at the rupture site. In terms of processing, farnesylation is required for nuclear envelope localization.

The protein localises to the nucleus membrane. In terms of biological role, nuclear envelope-associated factor that is involved in the nuclear envelope ruptures during interphase (NERDI) repair, where it is locally recruited by CHMP5 and reduces cytoskeletal stress through its action on SYN2 to help reseal the ruptured membrane. This chain is BRO1 domain-containing protein BROX, found in Mus musculus (Mouse).